Consider the following 259-residue polypeptide: Pyrroloquinoline-quinone synthase (259 aa).

The protein belongs to the PqqC family.

The enzyme catalyses 6-(2-amino-2-carboxyethyl)-7,8-dioxo-1,2,3,4,7,8-hexahydroquinoline-2,4-dicarboxylate + 3 O2 = pyrroloquinoline quinone + 2 H2O2 + 2 H2O + H(+). It functions in the pathway cofactor biosynthesis; pyrroloquinoline quinone biosynthesis. Ring cyclization and eight-electron oxidation of 3a-(2-amino-2-carboxyethyl)-4,5-dioxo-4,5,6,7,8,9-hexahydroquinoline-7,9-dicarboxylic-acid to PQQ. In Bradyrhizobium sp. (strain ORS 278), this protein is Pyrroloquinoline-quinone synthase.